We begin with the raw amino-acid sequence, 524 residues long: Cytochrome P450 monooxygenase lnaC (524 aa).

The chain crosses the membrane as a helical span at residues 16-36; the sequence is ALAVSCIAVSLFLLSPWIAYA. Asn-150 carries an N-linked (GlcNAc...) asparagine glycan. Cys-471 contributes to the heme binding site.

Belongs to the cytochrome P450 family. Requires heme as cofactor.

It localises to the membrane. The protein operates within secondary metabolite biosynthesis. In terms of biological role, cytochrome P450 monooxygenase; part of the lna gene cluster that mediates the biosynthesis of diastereomeric piperazines. Lna and lnb clusters encode sets of enzymes that produce overlapping sets of previously undescribed metabolites such as piperazinomycin-like metabolites or morpholine. The lna and lnb biosynthetic pathways appear to be part of a signaling network that controls the formation of sclerotia, a resilient overwintering structure. One primary function of the non-canonical nonribosomal peptide synthetases lnaA and lnbA consists in the reduction of L-tyrosine. The presence in the clusters of tailoring enzymes such as the oxidoreductases lnaB, lnbB, lnaE or lnbE, as well as of the cytochrome P450 monooxygenases lnaC, lnaD, or lnbC, might explain formation of various diastereomeric piperazines. In Aspergillus flavus (strain ATCC 200026 / FGSC A1120 / IAM 13836 / NRRL 3357 / JCM 12722 / SRRC 167), this protein is Cytochrome P450 monooxygenase lnaC.